Reading from the N-terminus, the 128-residue chain is MRYAIMVTGPAYGTQQASSALQFAHALLNEGHELASVFFYREGVYNANLLTSPASDEYDLVRAWQKLNTQHGVALNICVAAALRRGIIDETEAGRLALPSANLQPGFTLSGLGALAEASLTCDRVVQF.

Cys-78 acts as the Cysteine persulfide intermediate in catalysis.

This sequence belongs to the DsrE/TusD family. As to quaternary structure, heterohexamer, formed by a dimer of trimers. The hexameric TusBCD complex contains 2 copies each of TusB, TusC and TusD. The TusBCD complex interacts with TusE.

It is found in the cytoplasm. Part of a sulfur-relay system required for 2-thiolation of 5-methylaminomethyl-2-thiouridine (mnm(5)s(2)U) at tRNA wobble positions. Accepts sulfur from TusA and transfers it in turn to TusE. The sequence is that of Sulfurtransferase TusD from Salmonella agona (strain SL483).